The following is a 190-amino-acid chain: Peptidyl-tRNA hydrolase (190 aa).

A tRNA-binding site is contributed by Phe-14. Catalysis depends on His-19, which acts as the Proton acceptor. 3 residues coordinate tRNA: Met-64, Asn-66, and Asn-112.

The protein belongs to the PTH family. In terms of assembly, monomer.

The protein localises to the cytoplasm. The enzyme catalyses an N-acyl-L-alpha-aminoacyl-tRNA + H2O = an N-acyl-L-amino acid + a tRNA + H(+). Functionally, hydrolyzes ribosome-free peptidyl-tRNAs (with 1 or more amino acids incorporated), which drop off the ribosome during protein synthesis, or as a result of ribosome stalling. Catalyzes the release of premature peptidyl moieties from peptidyl-tRNA molecules trapped in stalled 50S ribosomal subunits, and thus maintains levels of free tRNAs and 50S ribosomes. This Staphylococcus haemolyticus (strain JCSC1435) protein is Peptidyl-tRNA hydrolase.